Consider the following 161-residue polypeptide: Lipid droplet assembly factor 1 (161 aa).

At 1–43 the chain is on the cytoplasmic side; sequence MAKEEPQSISRDLQELQKKLSLLIDSFQNNSKVVAFMKSPVGQ. The helical transmembrane segment at 44-61 threads the bilayer; that stretch reads YLDSHPFLAFTLLVFIVM. Topologically, residues 62 to 67 are lumenal; sequence SAVPVG. A helical transmembrane segment spans residues 68 to 87; it reads FFLLIVVLTTLAALLGVIIL. Residues 88-93 are Cytoplasmic-facing; the sequence is EGLVIS. Residues 94–110 form a helical membrane-spanning segment; that stretch reads VGGFSLLCILCGLGFVS. Residues 111-116 lie on the Lumenal side of the membrane; that stretch reads LAMSGM. Residues 117-133 traverse the membrane as a helical segment; that stretch reads MIASYVVVSSLISCWFS. The Cytoplasmic portion of the chain corresponds to 134-161; that stretch reads PRPLTQQNTSCDFLPAMKSAEFEGLYQE.

The protein belongs to the LDAF1 family. As to quaternary structure, interacts with isoform 1 and isoform 3 of BSCL2/seipin to form an oligomeric complex. As to expression, expressed at high levels in the heart and skeletal muscle. Expressed at low levels in kidney, small intestine, lung and liver.

It is found in the endoplasmic reticulum membrane. The protein resides in the lipid droplet. Its function is as follows. Plays an important role in the formation of lipid droplets (LD) which are storage organelles at the center of lipid and energy homeostasis. In association with BSCL2/seipin, defines the sites of LD formation in the endoplasmic reticulum. The chain is Lipid droplet assembly factor 1 from Homo sapiens (Human).